A 188-amino-acid chain; its full sequence is NADH-quinone oxidoreductase subunit I (188 aa).

2 4Fe-4S ferredoxin-type domains span residues 44–74 (LNRYADGLEKCIGCELCAWACPADAIFVEGA) and 90–119 (RVYQINYLRCIGCGLCIEACPTRALTMTNE). Residues Cys54, Cys57, Cys60, Cys64, Cys99, Cys102, Cys105, and Cys109 each contribute to the [4Fe-4S] cluster site. The segment at 144 to 188 (GMVDSPHPMAPGTTAEDYYRGTVTGGAAPASQDEPEADDTAGDRP) is disordered. The segment covering 176–188 (DEPEADDTAGDRP) has biased composition (acidic residues).

The protein belongs to the complex I 23 kDa subunit family. In terms of assembly, NDH-1 is composed of 14 different subunits. Subunits NuoA, H, J, K, L, M, N constitute the membrane sector of the complex. [4Fe-4S] cluster serves as cofactor.

Its subcellular location is the cell membrane. It catalyses the reaction a quinone + NADH + 5 H(+)(in) = a quinol + NAD(+) + 4 H(+)(out). Its function is as follows. NDH-1 shuttles electrons from NADH, via FMN and iron-sulfur (Fe-S) centers, to quinones in the respiratory chain. The immediate electron acceptor for the enzyme in this species is believed to be ubiquinone. Couples the redox reaction to proton translocation (for every two electrons transferred, four hydrogen ions are translocated across the cytoplasmic membrane), and thus conserves the redox energy in a proton gradient. The polypeptide is NADH-quinone oxidoreductase subunit I (Rhodococcus opacus (strain B4)).